Consider the following 75-residue polypeptide: MNQKHSSDFVVIKAVEDGVNVIGLTRGTDTKFHHSEKLDKGEVIIAQFTEHTSAIKVRGEALIQTAYGEMKSEKK.

The protein belongs to the MtrB family. As to quaternary structure, oligomer of 11 identical subunits arranged in doughnut-like structure.

In terms of biological role, required for transcription attenuation control in the trp operon. This trans-acting factor binds to trinucleotide repeats (GAG or UAG) located in the trp leader transcript causing transcription termination. Binds the leader RNA only in presence of L-tryptophan. This Bacillus subtilis (strain 168) protein is Transcription attenuation protein MtrB (mtrB).